Here is a 275-residue protein sequence, read N- to C-terminus: 4-diphosphocytidyl-2-C-methyl-D-erythritol kinase (275 aa).

K14 is a catalytic residue. Residue 98–108 (PMGAGLGGGSS) participates in ATP binding. D140 is an active-site residue.

The protein belongs to the GHMP kinase family. IspE subfamily.

It carries out the reaction 4-CDP-2-C-methyl-D-erythritol + ATP = 4-CDP-2-C-methyl-D-erythritol 2-phosphate + ADP + H(+). Its pathway is isoprenoid biosynthesis; isopentenyl diphosphate biosynthesis via DXP pathway; isopentenyl diphosphate from 1-deoxy-D-xylulose 5-phosphate: step 3/6. Functionally, catalyzes the phosphorylation of the position 2 hydroxy group of 4-diphosphocytidyl-2C-methyl-D-erythritol. The polypeptide is 4-diphosphocytidyl-2-C-methyl-D-erythritol kinase (Francisella tularensis subsp. tularensis (strain FSC 198)).